Consider the following 187-residue polypeptide: Ribosome hibernation promotion factor (187 aa).

The protein belongs to the HPF/YfiA ribosome-associated protein family. Long HPF subfamily. Interacts with 100S ribosomes.

Its subcellular location is the cytoplasm. Involved in 100S ribosome formation from 70S ribosomes; 100S ribosomes are probably translationally inactive. Ribosome hibernation may be used by the cell to decrease overall energy consumption under nutrient-limiting conditions. Unlike E.coli, 100S ribosomes are present from mid-exponential growth, peak during the transition from log to stationary phase and then decrease. In Listeria monocytogenes serotype 1/2a (strain 10403S), this protein is Ribosome hibernation promotion factor.